Consider the following 412-residue polypeptide: Solute carrier family 22 member 18 (412 aa).

The next 10 helical transmembrane spans lie at 16–36 (GIII…FMQF), 51–71 (VSFG…GPVF), 117–137 (LPAA…DLTA), 148–168 (LGLC…TLST), 176–196 (AFLA…CIPV), 232–252 (FLVK…FSII), 264–284 (AGYL…LVIG), 294–314 (ALLR…ALMS), 316–336 (VFHF…LNIV), and 380–400 (GVSI…LVLW).

Belongs to the major facilitator (TC 2.A.1) superfamily. Organic cation transporter (TC 2.A.1.19) family.

The protein resides in the apical cell membrane. Its function is as follows. May act as a transporter of organic cations based on a proton efflux antiport mechanism. May play a role in the transport of chloroquine and quinidine-related compounds in kidney. Plays a role in the regulation of lipid metabolism. This Rattus norvegicus (Rat) protein is Solute carrier family 22 member 18 (Slc67a1).